Here is a 418-residue protein sequence, read N- to C-terminus: Serine--tRNA ligase (418 aa).

231–233 (TAE) contributes to the L-serine binding site. 262 to 264 (RRE) lines the ATP pocket. L-serine is bound at residue E285. 349–352 (EISS) serves as a coordination point for ATP. S384 contributes to the L-serine binding site.

The protein belongs to the class-II aminoacyl-tRNA synthetase family. Type-1 seryl-tRNA synthetase subfamily. In terms of assembly, homodimer. The tRNA molecule binds across the dimer.

It localises to the cytoplasm. It carries out the reaction tRNA(Ser) + L-serine + ATP = L-seryl-tRNA(Ser) + AMP + diphosphate + H(+). The catalysed reaction is tRNA(Sec) + L-serine + ATP = L-seryl-tRNA(Sec) + AMP + diphosphate + H(+). The protein operates within aminoacyl-tRNA biosynthesis; selenocysteinyl-tRNA(Sec) biosynthesis; L-seryl-tRNA(Sec) from L-serine and tRNA(Sec): step 1/1. In terms of biological role, catalyzes the attachment of serine to tRNA(Ser). Is also able to aminoacylate tRNA(Sec) with serine, to form the misacylated tRNA L-seryl-tRNA(Sec), which will be further converted into selenocysteinyl-tRNA(Sec). The sequence is that of Serine--tRNA ligase from Coprothermobacter proteolyticus (strain ATCC 35245 / DSM 5265 / OCM 4 / BT).